The sequence spans 683 residues: 1,4-alpha-glucan-branching enzyme (683 aa).

(1,4-alpha-D-glucosyl)n contacts are provided by Trp-92 and Lys-127. The active-site Nucleophile is the Asp-342. Residue Glu-397 is the Proton donor of the active site.

Belongs to the glycosyl hydrolase 13 family. GlgB subfamily.

It is found in the cytoplasm. It carries out the reaction Transfers a segment of a (1-&gt;4)-alpha-D-glucan chain to a primary hydroxy group in a similar glucan chain.. Its pathway is glycan biosynthesis; glycogen biosynthesis. In terms of biological role, glycogen-branching enzyme participates in the glycogen biosynthetic process along with glycogenin and glycogen synthase. Generates alpha-1,6-glucosidic branches from alpha-1,4-linked glucose chains, to increase solubility of the glycogen polymer. The polypeptide is 1,4-alpha-glucan-branching enzyme (GLC3) (Rhizophagus irregularis (strain DAOM 181602 / DAOM 197198 / MUCL 43194) (Arbuscular mycorrhizal fungus)).